Consider the following 239-residue polypeptide: Geranylgeranylglyceryl phosphate synthase (239 aa).

Residues D18 and S45 each contribute to the Mg(2+) site. Sn-glycerol 1-phosphate-binding positions include 166–172, 197–198, and 219–220; these read YLEAGSG, GG, and GT.

This sequence belongs to the GGGP/HepGP synthase family. Group II subfamily. Mg(2+) is required as a cofactor.

The protein localises to the cytoplasm. It carries out the reaction sn-glycerol 1-phosphate + (2E,6E,10E)-geranylgeranyl diphosphate = sn-3-O-(geranylgeranyl)glycerol 1-phosphate + diphosphate. It participates in membrane lipid metabolism; glycerophospholipid metabolism. Prenyltransferase that catalyzes the transfer of the geranylgeranyl moiety of geranylgeranyl diphosphate (GGPP) to the C3 hydroxyl of sn-glycerol-1-phosphate (G1P). This reaction is the first ether-bond-formation step in the biosynthesis of archaeal membrane lipids. In Pyrobaculum aerophilum (strain ATCC 51768 / DSM 7523 / JCM 9630 / CIP 104966 / NBRC 100827 / IM2), this protein is Geranylgeranylglyceryl phosphate synthase.